The chain runs to 283 residues: uncharacterized protein (283 aa).

N15 is a glycosylation site (N-linked (GlcNAc...) asparagine). The PQ-loop 1 domain maps to 15 to 81 (NATASTVFAI…QELNIALKVQ (67 aa)). Transmembrane regions (helical) follow at residues 19 to 39 (STVFAILGTVCWCVQLIPQII), 48 to 68 (EGLDTLFILSWVVASIPLSVY), 108 to 128 (ALFVVISFMLFSGGLQAMLIL), 138 to 158 (VEWPVVFMGVLATVLVNIGFL), 170 to 190 (VTGISYLFLAIDSSGSLFSFL), and 206 to 226 (GLLFIIEMGVFVLAFIFNVLL). A PQ-loop 2 domain is found at 149–204 (ATVLVNIGFLPQYISIFRARAVTGISYLFLAIDSSGSLFSFLSLPFDRWDVLAAVD). Residue N228 is glycosylated (N-linked (GlcNAc...) asparagine).

The protein localises to the membrane. This is an uncharacterized protein from Schizosaccharomyces pombe (strain 972 / ATCC 24843) (Fission yeast).